A 494-amino-acid chain; its full sequence is Serine/threonine-protein kinase cst-1 (494 aa).

The interval 1 to 27 (MPPSTDSSRRNSEEGFSDGFKLDSSAL) is disordered. Residues 35-286 (FDIVGKLGEG…ALRLCEHTFI (252 aa)) enclose the Protein kinase domain. ATP contacts are provided by residues 41 to 49 (LGEGSYGSV) and K64. D154 (proton acceptor) is an active-site residue. Residues 364 to 413 (IPKSAYGSSRNNGSPRVQPPGHTASACDPSNNPPFAEEGTGPNFQIGTSE) form a disordered region. The span at 369–378 (YGSSRNNGSP) shows a compositional bias: polar residues. One can recognise an SARAH domain in the interval 443–490 (FEFLRNITLDELIRRKESLDSEMEEEIRELQRRYKTKRQPILDVIEIK).

It belongs to the protein kinase superfamily. STE Ser/Thr protein kinase family. STE20 subfamily. Mg(2+) serves as cofactor. Post-translationally, proteolytically cleaved by caspase-3 during apoptosis which results in kinase activation.

It catalyses the reaction L-seryl-[protein] + ATP = O-phospho-L-seryl-[protein] + ADP + H(+). The catalysed reaction is L-threonyl-[protein] + ATP = O-phospho-L-threonyl-[protein] + ADP + H(+). Serine/threonine-protein kinase which extends lifespan and delays tissue aging, probably by activating daf-16. This chain is Serine/threonine-protein kinase cst-1 (cst-1), found in Caenorhabditis briggsae.